The sequence spans 529 residues: Putative amidohydrolase YtcJ (529 aa).

The protein belongs to the metallo-dependent hydrolases superfamily.

This Bacillus subtilis (strain 168) protein is Putative amidohydrolase YtcJ (ytcJ).